Here is a 29-residue protein sequence, read N- to C-terminus: Glucagon (29 aa).

This sequence belongs to the glucagon family.

The protein resides in the secreted. Its function is as follows. Glucagon plays a key role in glucose metabolism and homeostasis. Regulates blood glucose by increasing gluconeogenesis and decreasing glycolysis. The chain is Glucagon (gcg) from Polypterus senegalus (Senegal bichir).